The following is a 1125-amino-acid chain: Tip elongation aberrant protein 3 (1125 aa).

5 Kelch repeats span residues 73–123 (FMYL…CSAD), 124–179 (TIYL…LVDS), 181–226 (LWIF…KANM), 259–308 (KIFV…TIDD), and 310–360 (VYIY…SKNN). Ser430, Ser437, Ser460, Ser523, Ser980, Ser982, Ser983, Ser984, Ser1078, and Ser1080 each carry phosphoserine. Positions 507-530 (PLPNGNDTISRSSESSSPINESES) are disordered. Over residues 515–530 (ISRSSESSSPINESES) the composition is skewed to low complexity.

The protein resides in the cell tip. In terms of biological role, acts as a cell end marker required for efficient new end take-off (NETO), whereby growth is activated at the cell end to generate bipolarity in extending cells. Also required for proper placement of the septum. This is Tip elongation aberrant protein 3 (tea3) from Schizosaccharomyces pombe (strain 972 / ATCC 24843) (Fission yeast).